A 78-amino-acid chain; its full sequence is Translation initiation factor IF-1, chloroplastic (78 aa).

The 72-residue stretch at 1 to 72 folds into the S1-like domain; that stretch reads MKKQNLIDME…TKGRITYRLR (72 aa).

The protein belongs to the IF-1 family. As to quaternary structure, component of the 30S ribosomal translation pre-initiation complex which assembles on the 30S ribosome in the order IF-2 and IF-3, IF-1 and N-formylmethionyl-tRNA(fMet); mRNA recruitment can occur at any time during PIC assembly.

It localises to the plastid. The protein localises to the chloroplast. Functionally, one of the essential components for the initiation of protein synthesis. Stabilizes the binding of IF-2 and IF-3 on the 30S subunit to which N-formylmethionyl-tRNA(fMet) subsequently binds. Helps modulate mRNA selection, yielding the 30S pre-initiation complex (PIC). Upon addition of the 50S ribosomal subunit IF-1, IF-2 and IF-3 are released leaving the mature 70S translation initiation complex. The sequence is that of Translation initiation factor IF-1, chloroplastic from Physcomitrium patens (Spreading-leaved earth moss).